A 1288-amino-acid polypeptide reads, in one-letter code: Outer capsid protein lambda-2 (1288 aa).

892-899 (GAAAAGKS) is an ATP binding site.

Belongs to the orthoreovirus lambda-2 protein family. Interacts with protein mu-NS; in viral inclusions.

It is found in the virion. It catalyses the reaction a 5'-end diphospho-ribonucleoside in mRNA + GTP + H(+) = a 5'-end (5'-triphosphoguanosine)-ribonucleoside in mRNA + diphosphate. It carries out the reaction a 5'-end (5'-triphosphoguanosine)-ribonucleoside in mRNA + S-adenosyl-L-methionine = a 5'-end (N(7)-methyl 5'-triphosphoguanosine)-ribonucleoside in mRNA + S-adenosyl-L-homocysteine. Outer capsid protein involved in mRNA capping. Catalyzes the last 3 enzymatic activities for formation of the 5' cap structure on the viral plus-strand transcripts, namely the RNA guanylyltransferase, RNA-7N- and RNA-2'O-methyltransferase activities. This Reovirus type 2 (strain D5/Jones) (T2J) protein is Outer capsid protein lambda-2 (L2).